Consider the following 363-residue polypeptide: Branched-chain-amino-acid aminotransferase 2 (363 aa).

Lys-197 carries the post-translational modification N6-(pyridoxal phosphate)lysine.

It belongs to the class-IV pyridoxal-phosphate-dependent aminotransferase family. Pyridoxal 5'-phosphate serves as cofactor.

The catalysed reaction is L-leucine + 2-oxoglutarate = 4-methyl-2-oxopentanoate + L-glutamate. It carries out the reaction L-isoleucine + 2-oxoglutarate = (S)-3-methyl-2-oxopentanoate + L-glutamate. The enzyme catalyses L-valine + 2-oxoglutarate = 3-methyl-2-oxobutanoate + L-glutamate. It functions in the pathway amino-acid biosynthesis; L-isoleucine biosynthesis; L-isoleucine from 2-oxobutanoate: step 4/4. It participates in amino-acid biosynthesis; L-leucine biosynthesis; L-leucine from 3-methyl-2-oxobutanoate: step 4/4. The protein operates within amino-acid biosynthesis; L-valine biosynthesis; L-valine from pyruvate: step 4/4. Inhibited by canaline. Transaminates branched-chain amino acids and ketoglutarate. This Bacillus subtilis (strain 168) protein is Branched-chain-amino-acid aminotransferase 2 (ilvK).